The following is a 346-amino-acid chain: Protein RecA (346 aa).

67–74 is a binding site for ATP; the sequence is GPESSGKT.

It belongs to the RecA family.

It is found in the cytoplasm. Can catalyze the hydrolysis of ATP in the presence of single-stranded DNA, the ATP-dependent uptake of single-stranded DNA by duplex DNA, and the ATP-dependent hybridization of homologous single-stranded DNAs. It interacts with LexA causing its activation and leading to its autocatalytic cleavage. The polypeptide is Protein RecA (Mycobacteroides abscessus (strain ATCC 19977 / DSM 44196 / CCUG 20993 / CIP 104536 / JCM 13569 / NCTC 13031 / TMC 1543 / L948) (Mycobacterium abscessus)).